The following is a 146-amino-acid chain: Hemoglobin subunit beta-2 (146 aa).

The region spanning 2–146 (EWTDFERATI…VVSSLGRQYH (145 aa)) is the Globin domain. Residues His-63 and His-92 each coordinate heme b.

This sequence belongs to the globin family. Hb 2 is a heterotetramer of two alpha-2 and two beta-2 chains. Red blood cells.

In terms of biological role, involved in oxygen transport from gills to the various peripheral tissues. The chain is Hemoglobin subunit beta-2 (hbb2) from Gobionotothen gibberifrons (Humped rockcod).